The following is a 169-amino-acid chain: Protein pid-1 (169 aa).

Residues 137-151 (SGSPRITPQKHTPVS) are compositionally biased toward polar residues. The segment at 137–169 (SGSPRITPQKHTPVSANHKPARSIFDDIPSNIA) is disordered.

Component of the pid-1 variant of the PETISCO complex (also called the pid-3, erh-2, tofu-6, and ife-3 small RNA complex) containing at least pid-1, tofu-6, ife-3, pid-3, and erh-2, which is required for the biogenesis of a class of 21 nucleotide PIWI-interacting RNAs (piRNAs) that possess a uracil residue at the 5'-end (also called 21U-RNAs). Within the complex interacts with pid-3; the interaction is direct. Within the complex interacts with erh-2. Within the complex interacts with tofu-6. In terms of tissue distribution, expressed predominantly in the germline (at protein level).

The protein resides in the cytoplasm. It is found in the nucleus. Its subcellular location is the perinuclear region. Its function is as follows. Component of the pid-1 variant of the PETISCO complex which is required for the biogenesis of a class of 21 nucleotide PIWI-interacting RNAs (piRNAs) that possess a uracil residue at the 5'-end (also called 21U-RNAs). Within the complex acts as an adapter which binds to the complex via erh-2. Involved in the biogenesis of 21U-RNAs which guide the piwi protein prg-1 to its DNA targets for silencing. Plays a role in small RNA-directed transgenerational epigenetic inheritance. This Caenorhabditis elegans protein is Protein pid-1.